Here is a 313-residue protein sequence, read N- to C-terminus: Protoheme IX farnesyltransferase (313 aa).

Helical transmembrane passes span 22–42, 46–66, 98–118, 121–141, 150–170, 177–197, 223–243, 246–266, and 284–304; these read FALL…VGLM, IGVH…GGGA, GEAL…LALA, VFAG…YTMW, IVIG…AATG, WLMF…LALF, ILVY…TSVG, IYLT…VQIW, and FFKL…AEAL.

It belongs to the UbiA prenyltransferase family. Protoheme IX farnesyltransferase subfamily. Interacts with CtaA.

The protein resides in the cell inner membrane. The enzyme catalyses heme b + (2E,6E)-farnesyl diphosphate + H2O = Fe(II)-heme o + diphosphate. Its pathway is porphyrin-containing compound metabolism; heme O biosynthesis; heme O from protoheme: step 1/1. Its function is as follows. Converts heme B (protoheme IX) to heme O by substitution of the vinyl group on carbon 2 of heme B porphyrin ring with a hydroxyethyl farnesyl side group. This Ruegeria sp. (strain TM1040) (Silicibacter sp.) protein is Protoheme IX farnesyltransferase.